A 332-amino-acid polypeptide reads, in one-letter code: Glycerol-3-phosphate dehydrogenase [NAD(P)+] (332 aa).

Residues Ser-11, Phe-12, Lys-32, and Lys-106 each coordinate NADPH. Positions 106, 137, and 139 each coordinate sn-glycerol 3-phosphate. Ala-141 is a binding site for NADPH. Sn-glycerol 3-phosphate contacts are provided by Lys-192, Asp-245, Ser-255, Arg-256, and Asn-257. Catalysis depends on Lys-192, which acts as the Proton acceptor. Arg-256 is an NADPH binding site. The NADPH site is built by Val-280 and Glu-282.

The protein belongs to the NAD-dependent glycerol-3-phosphate dehydrogenase family.

The protein resides in the cytoplasm. It catalyses the reaction sn-glycerol 3-phosphate + NAD(+) = dihydroxyacetone phosphate + NADH + H(+). The catalysed reaction is sn-glycerol 3-phosphate + NADP(+) = dihydroxyacetone phosphate + NADPH + H(+). It participates in membrane lipid metabolism; glycerophospholipid metabolism. In terms of biological role, catalyzes the reduction of the glycolytic intermediate dihydroxyacetone phosphate (DHAP) to sn-glycerol 3-phosphate (G3P), the key precursor for phospholipid synthesis. This Staphylococcus aureus (strain Mu3 / ATCC 700698) protein is Glycerol-3-phosphate dehydrogenase [NAD(P)+].